A 149-amino-acid polypeptide reads, in one-letter code: Alpha-crystallin A chain (149 aa).

The region spanning 41 to 149 (LFRSVLESGI…DPSHSERPIP (109 aa)) is the sHSP domain. 4 residues coordinate Zn(2+): His-89, Glu-91, His-96, and His-143.

Belongs to the small heat shock protein (HSP20) family. In terms of assembly, heteropolymer composed of three CRYAA and one CRYAB subunits. Inter-subunit bridging via zinc ions enhances stability, which is crucial as there is no protein turn over in the lens. Can also form homodimers and homotetramers (dimers of dimers) which serve as the building blocks of homooligomers. Within homooligomers, the zinc-binding motif is created from residues of 3 different molecules. His-89 and Glu-91 from one molecule are ligands of the zinc ion, and His-96 and His-143 residues from additional molecules complete the site with tetrahedral coordination geometry.

It localises to the cytoplasm. The protein localises to the nucleus. Its function is as follows. Contributes to the transparency and refractive index of the lens. May act as a chaperone, preventing aggregation of various proteins under a wide range of stress conditions. The protein is Alpha-crystallin A chain (CRYAA) of Eudromia elegans (Elegant crested-tinamou).